Here is a 1044-residue protein sequence, read N- to C-terminus: MFKKVESKVNFPKIEEKVLKFWNDNKIFEKSMQQREGCEEFTFYDGPPFATGLPHFGHFVPNTIKDIIPRYKTMKGKHVKRYFGWDTHGLPVEYEVEKSLQISGRYEIEKYGVDKFNEECKNIVLRYTKEWQKTISRLGRWVDFEHNYKTMDTTFMESVWWVFQTLYNKGLIYESYYVLPYSPKLATPLSNFEVNLGEYKEVHDPSLTIKFKIKDKNEYLLAWTTTPWTLPTNLGIAVGRDIDYSKIFDKEKNETFIIGTKRLNHYYKDDKTYTVIEQFKGEHIKGIEYEPVFDYFLSQRNKGAFRIHTAEYVTTDDGTGIVHIAPFGEEDYNILKKNTKTDMITPIDAECRFTNEVKDFEGLFVKDADNKIIEKLKSMNLLFKRENFLHRYPFCYRTNSPLIYRPISSWFVNIEAIKEKLIKSNEQINWIPSHLKKGRFGKWLENARDWAISRNRFWGNPIPVWICSKTGNKICIGSKEELERLSGQKVNDLHKDKIDKITWPSQYGGTYVRTSEVLDCWFESGSMPYASKHYPFKDKDKFHDIFPADFIAEGLDQTRGWFYTLTILGTALFEQTAFKNVIVNGLVLSSDGRKMSKSLRNYTDPMEVINTFGADALRLYLVMSPVVRADDLKYSDDGVKDVLKNIIIPIWNAYSFFITYAIIDKFEPNSNIVLYKTNILDKWIISEIESLKKTLNEEIDKYNLTKSIEELLAFIDKLNNWYIRRSRRRFWKSENDNDKIDAYETLYYALKNLMLMLAPFIPFLTEEIYQNLKTKDEKESIHLNEYPQEIKELINIDLEEKMNFIRKVVSIARALRASHNIKIRKPISTIYIVTKDQKEQQILSEMKEIILEEINSEEIKIKSNEEELVTYKAKANFRELGSKLGTNMKAVALEIMKLNNEDILKIINGNKHTIKIKDNTYDITLKDIILERHEKENLKVINEDSVTIGLDALITEELYLKGLSRELIRKVQNLRKENNFNVSDRIILYIDNNEILKKIISQFESYIKNETLTLKIEINNEKALTKVELDDEILIKIGIEKWSN.

A 'HIGH' region motif is present at residues 48-58 (PFATGLPHFGH). Positions 594 to 598 (KMSKS) match the 'KMSKS' region motif. K597 lines the ATP pocket.

This sequence belongs to the class-I aminoacyl-tRNA synthetase family. IleS type 2 subfamily. Monomer. Requires Zn(2+) as cofactor.

The protein resides in the cytoplasm. The enzyme catalyses tRNA(Ile) + L-isoleucine + ATP = L-isoleucyl-tRNA(Ile) + AMP + diphosphate. Functionally, catalyzes the attachment of isoleucine to tRNA(Ile). As IleRS can inadvertently accommodate and process structurally similar amino acids such as valine, to avoid such errors it has two additional distinct tRNA(Ile)-dependent editing activities. One activity is designated as 'pretransfer' editing and involves the hydrolysis of activated Val-AMP. The other activity is designated 'posttransfer' editing and involves deacylation of mischarged Val-tRNA(Ile). This chain is Isoleucine--tRNA ligase, found in Borrelia hermsii (strain HS1 / DAH).